The sequence spans 56 residues: MAVQKNKPTRSKRGMRRSHDALTTALLSVDKTSGENHLRHHITTDGYYRGRKVINR.

Residues 1 to 21 (MAVQKNKPTRSKRGMRRSHDA) are disordered. The segment covering 7-16 (KPTRSKRGMR) has biased composition (basic residues).

It belongs to the bacterial ribosomal protein bL32 family.

This is Large ribosomal subunit protein bL32 from Hamiltonella defensa subsp. Acyrthosiphon pisum (strain 5AT).